Reading from the N-terminus, the 196-residue chain is Large ribosomal subunit protein uL10 (196 aa).

Positions 163–196 (GAPAAAEAPAAEEAPAAEAAETEAPAEAAATEEN) are disordered. Residues 164–196 (APAAAEAPAAEEAPAAEAAETEAPAEAAATEEN) are compositionally biased toward low complexity.

This sequence belongs to the universal ribosomal protein uL10 family. Part of the ribosomal stalk of the 50S ribosomal subunit. The N-terminus interacts with L11 and the large rRNA to form the base of the stalk. The C-terminus forms an elongated spine to which L12 dimers bind in a sequential fashion forming a multimeric L10(L12)X complex.

Functionally, forms part of the ribosomal stalk, playing a central role in the interaction of the ribosome with GTP-bound translation factors. This chain is Large ribosomal subunit protein uL10, found in Arthrobacter sp. (strain FB24).